The sequence spans 374 residues: N5-carboxyaminoimidazole ribonucleotide synthase (374 aa).

ATP contacts are provided by residues Arg108, Lys148, 153 to 159 (GYDGKGQ), 183 to 186 (EKYL), Glu191, His214, and 266 to 267 (NE). An ATP-grasp domain is found at 112 to 296 (KETLKSAGTK…QFDTHILAVT (185 aa)).

The protein belongs to the PurK/PurT family. Homodimer.

It catalyses the reaction 5-amino-1-(5-phospho-beta-D-ribosyl)imidazole + hydrogencarbonate + ATP = 5-carboxyamino-1-(5-phospho-D-ribosyl)imidazole + ADP + phosphate + 2 H(+). The protein operates within purine metabolism; IMP biosynthesis via de novo pathway; 5-amino-1-(5-phospho-D-ribosyl)imidazole-4-carboxylate from 5-amino-1-(5-phospho-D-ribosyl)imidazole (N5-CAIR route): step 1/2. In terms of biological role, catalyzes the ATP-dependent conversion of 5-aminoimidazole ribonucleotide (AIR) and HCO(3)(-) to N5-carboxyaminoimidazole ribonucleotide (N5-CAIR). The polypeptide is N5-carboxyaminoimidazole ribonucleotide synthase (Staphylococcus aureus (strain COL)).